The primary structure comprises 367 residues: Alginate lyase (367 aa).

Residues Met1–Ala27 form the signal peptide. Residues Ser65–Lys66, His138–Thr139, and Tyr256 contribute to the substrate site.

It belongs to the polysaccharide lyase 5 family.

Its subcellular location is the periplasm. The catalysed reaction is Eliminative cleavage of alginate to give oligosaccharides with 4-deoxy-alpha-L-erythro-hex-4-enuronosyl groups at their non-reducing ends and beta-D-mannuronate at their reducing end.. Functionally, catalyzes the depolymerization of alginate by cleaving the beta-1,4 glycosidic bond between two adjacent sugar residues via a beta-elimination mechanism. May serve to degrade mislocalized alginate that is trapped in the periplasmic space. Acts preferentially on non-acetylated alginate or its precursor mannuronan. Is able to catalyze cleavage adjacent to either mannuronate or guluronate residues in alginate. Exhaustive digestion of alginate by AlgL generates dimeric and trimeric products. In addition to its enzymatic function, AlgL appears to be required for alginate export, maybe as part of a multi-protein alginate-secretion complex. This chain is Alginate lyase, found in Pseudomonas aeruginosa (strain ATCC 15692 / DSM 22644 / CIP 104116 / JCM 14847 / LMG 12228 / 1C / PRS 101 / PAO1).